The sequence spans 385 residues: UDP-N-acetylglucosamine--N-acetylmuramyl-(pentapeptide) pyrophosphoryl-undecaprenol N-acetylglucosamine transferase (385 aa).

Residues 24–26, N143, R180, S214, and Q310 each bind UDP-N-acetyl-alpha-D-glucosamine; that span reads TAG.

It belongs to the glycosyltransferase 28 family. MurG subfamily.

Its subcellular location is the cell membrane. It carries out the reaction di-trans,octa-cis-undecaprenyl diphospho-N-acetyl-alpha-D-muramoyl-L-alanyl-D-glutamyl-meso-2,6-diaminopimeloyl-D-alanyl-D-alanine + UDP-N-acetyl-alpha-D-glucosamine = di-trans,octa-cis-undecaprenyl diphospho-[N-acetyl-alpha-D-glucosaminyl-(1-&gt;4)]-N-acetyl-alpha-D-muramoyl-L-alanyl-D-glutamyl-meso-2,6-diaminopimeloyl-D-alanyl-D-alanine + UDP + H(+). It participates in cell wall biogenesis; peptidoglycan biosynthesis. Cell wall formation. Catalyzes the transfer of a GlcNAc subunit on undecaprenyl-pyrophosphoryl-MurNAc-pentapeptide (lipid intermediate I) to form undecaprenyl-pyrophosphoryl-MurNAc-(pentapeptide)GlcNAc (lipid intermediate II). This chain is UDP-N-acetylglucosamine--N-acetylmuramyl-(pentapeptide) pyrophosphoryl-undecaprenol N-acetylglucosamine transferase, found in Mycolicibacterium smegmatis (strain ATCC 700084 / mc(2)155) (Mycobacterium smegmatis).